The chain runs to 208 residues: CASP-like protein 2A1 (208 aa).

Residues 1 to 36 lie on the Cytoplasmic side of the membrane; it reads MSKMAEQKAAAVDGLGGAGAADAAPAGEAAAARVRP. A helical membrane pass occupies residues 37-57; it reads VETLLRAAPLGLCVAAMTVML. The Extracellular portion of the chain corresponds to 58-78; the sequence is RDQQSNEYGTVAYSDLGGFKY. Residues 79–99 form a helical membrane-spanning segment; sequence LVYANGLCAAYSLVSAFYTAV. The Cytoplasmic portion of the chain corresponds to 100-108; that stretch reads PRPATVSRS. A helical transmembrane segment spans residues 109–129; that stretch reads WVVFLLDQVFTYLILAAGAAA. Residues 130–161 are Extracellular-facing; the sequence is AELLYLAYNGDKEVTWSEACGVFGSFCRQART. Residues 162–182 traverse the membrane as a helical segment; that stretch reads SVAITFGTVLCFILLSLISSY. Residues 183–208 are Cytoplasmic-facing; it reads RLFSAYEAPPSSALGSKGVEIAAYPR.

It belongs to the Casparian strip membrane proteins (CASP) family. Homodimer and heterodimers.

It localises to the cell membrane. The chain is CASP-like protein 2A1 from Sorghum bicolor (Sorghum).